A 396-amino-acid chain; its full sequence is Argininosuccinate synthase (396 aa).

ATP is bound at residue 9–17; sequence AYSGGLDTS. Y85 serves as a coordination point for L-citrulline. ATP is bound at residue G115. L-aspartate contacts are provided by T117, N121, and D122. Position 121 (N121) interacts with L-citrulline. Positions 125, 173, 258, and 270 each coordinate L-citrulline.

This sequence belongs to the argininosuccinate synthase family. Type 1 subfamily. As to quaternary structure, homotetramer.

Its subcellular location is the cytoplasm. It catalyses the reaction L-citrulline + L-aspartate + ATP = 2-(N(omega)-L-arginino)succinate + AMP + diphosphate + H(+). It participates in amino-acid biosynthesis; L-arginine biosynthesis; L-arginine from L-ornithine and carbamoyl phosphate: step 2/3. The polypeptide is Argininosuccinate synthase (Streptococcus agalactiae serotype V (strain ATCC BAA-611 / 2603 V/R)).